The chain runs to 131 residues: Urease subunit beta (131 aa).

The segment at 100–131 (PLDPAAGVTSDEDAASAVVPRGAETSEREARA) is disordered.

The protein belongs to the urease beta subunit family. As to quaternary structure, heterotrimer of UreA (gamma), UreB (beta) and UreC (alpha) subunits. Three heterotrimers associate to form the active enzyme.

It localises to the cytoplasm. The catalysed reaction is urea + 2 H2O + H(+) = hydrogencarbonate + 2 NH4(+). Its pathway is nitrogen metabolism; urea degradation; CO(2) and NH(3) from urea (urease route): step 1/1. This is Urease subunit beta from Kocuria rhizophila (strain ATCC 9341 / DSM 348 / NBRC 103217 / DC2201).